The following is a 390-amino-acid chain: 8-demethyl-8-(2-methoxy-alpha-L-rhamnosyl)-tetracenomycin-C 3'-O-methyltransferase (390 aa).

Residues 202-208 (ELGIGGY), serine 217, aspartate 234, 252-253 (SQ), and aspartate 275 contribute to the S-adenosyl-L-methionine site. Aspartate 275 lines the Mg(2+) pocket. Histidine 278 (proton acceptor) is an active-site residue. Residues glutamate 303 and aspartate 304 each coordinate Mg(2+).

It belongs to the methyltransferase OleY/MycE family. Mg(2+) is required as a cofactor.

It carries out the reaction 8-demethyl-8-(2-O-methyl-alpha-L-rhamnosyl)-tetracenomycin C + S-adenosyl-L-methionine = 8-demethyl-8-(2,3-di-O-methyl-alpha-L-rhamnosyl)-tetracenomycin C + S-adenosyl-L-homocysteine + H(+). The protein operates within antibiotic biosynthesis. Its function is as follows. O-methyltransferase involved in the biosynthesis of the permethylated L-rhamnose moiety of elloramycin, an antitumor polyketide. Mediates the methylation of the hydroxy groups at the 3'-position after the sugar moiety has been attached to the aglycon. This is 8-demethyl-8-(2-methoxy-alpha-L-rhamnosyl)-tetracenomycin-C 3'-O-methyltransferase from Streptomyces olivaceus.